The sequence spans 297 residues: Phosphoribosylaminoimidazole-succinocarboxamide synthase (297 aa).

It belongs to the SAICAR synthetase family.

It catalyses the reaction 5-amino-1-(5-phospho-D-ribosyl)imidazole-4-carboxylate + L-aspartate + ATP = (2S)-2-[5-amino-1-(5-phospho-beta-D-ribosyl)imidazole-4-carboxamido]succinate + ADP + phosphate + 2 H(+). The protein operates within purine metabolism; IMP biosynthesis via de novo pathway; 5-amino-1-(5-phospho-D-ribosyl)imidazole-4-carboxamide from 5-amino-1-(5-phospho-D-ribosyl)imidazole-4-carboxylate: step 1/2. The polypeptide is Phosphoribosylaminoimidazole-succinocarboxamide synthase (Mycobacterium ulcerans (strain Agy99)).